Reading from the N-terminus, the 584-residue chain is Levansucrase (584 aa).

The first 30 residues, 1-30 (MAHVRRKVATLNMALAGSLLMVLGAQSALA), serve as a signal peptide directing secretion. Glutamine 31 bears the Pyrrolidone carboxylic acid mark. 5 residues coordinate sucrose: tryptophan 134, aspartate 135, serine 225, arginine 308, and aspartate 309. The active-site Nucleophile is the aspartate 135. A disulfide bridge links cysteine 339 with cysteine 395. Residue glutamate 401 is the Proton donor/acceptor of the active site.

It belongs to the glycosyl hydrolase 68 family. In terms of assembly, monomer. In terms of processing, the N-terminus is blocked. The N-terminal Gln is cyclized to a pyroglutamic acid.

It is found in the secreted. It catalyses the reaction [6)-beta-D-fructofuranosyl-(2-&gt;](n) alpha-D-glucopyranoside + sucrose = [6)-beta-D-fructofuranosyl-(2-&gt;](n+1) alpha-D-glucopyranoside + D-glucose. Its activity is regulated as follows. Strongly inhibited by Hg(2+) and slightly activated by Co(2+). Not inhibited by the metal ion chelator EDTA, suggesting that this enzyme does not need a metal cofactor. In terms of biological role, catalyzes the synthesis of levan, a fructose polymer, by transferring the fructosyl moiety from sucrose to a growing acceptor molecule. Also displays sucrose hydrolase activity. In vitro, catalyzes transfructosylation from sucrose to a variety of acceptors including water (sucrose hydrolysis), glucose (exchange reaction), fructan (polymerase reaction) and sucrose (oligofructoside synthesis). Levansucrase of G.diazotrophicus SRT4, unlike the enzyme of B.subtilis, causes accumulation of large quantities of tri- and tetrasaccharides but small quantities of high-molecular-mass levan. It may act more as a sucrose hydrolase than as a fructan polymerase, and may be the key enzyme in the sucrose metabolism of G.diazotrophicus SRT4. This is Levansucrase from Gluconacetobacter diazotrophicus (Acetobacter diazotrophicus).